Reading from the N-terminus, the 190-residue chain is Glutathione peroxidase 2 (190 aa).

U40 is a catalytic residue. A non-standard amino acid (selenocysteine) is located at residue U40.

This sequence belongs to the glutathione peroxidase family. Homotetramer.

Its subcellular location is the cytoplasm. The protein resides in the cytosol. The enzyme catalyses 2 glutathione + H2O2 = glutathione disulfide + 2 H2O. The catalysed reaction is a hydroperoxy polyunsaturated fatty acid + 2 glutathione = a hydroxy polyunsaturated fatty acid + glutathione disulfide + H2O. It carries out the reaction tert-butyl hydroperoxide + 2 glutathione = tert-butanol + glutathione disulfide + H2O. It catalyses the reaction cumene hydroperoxide + 2 glutathione = 2-phenylpropan-2-ol + glutathione disulfide + H2O. The enzyme catalyses (13S)-hydroperoxy-(9Z,11E)-octadecadienoate + 2 glutathione = (13S)-hydroxy-(9Z,11E)-octadecadienoate + glutathione disulfide + H2O. The catalysed reaction is (5S)-hydroperoxy-(6E,8Z,11Z,14Z)-eicosatetraenoate + 2 glutathione = (5S)-hydroxy-(6E,8Z,11Z,14Z)-eicosatetraenoate + glutathione disulfide + H2O. It carries out the reaction (12R)-hydroperoxy-(5Z,8Z,10E,14Z)-eicosatetraenoate + 2 glutathione = (12R)-hydroxy-(5Z,8Z,10E,14Z)-eicosatetraenoate + glutathione disulfide + H2O. It catalyses the reaction (15S)-hydroperoxy-(5Z,8Z,11Z,13E)-eicosatetraenoate + 2 glutathione = (15S)-hydroxy-(5Z,8Z,11Z,13E)-eicosatetraenoate + glutathione disulfide + H2O. Catalyzes the reduction of hydroperoxides in a glutathione-dependent manner thus regulating cellular redox homeostasis. Can reduce small soluble hydroperoxides such as H2O2, cumene hydroperoxide and tert-butyl hydroperoxide, as well as several fatty acid-derived hydroperoxides. Cannot reduce phosphatidycholine hydroperoxide. The polypeptide is Glutathione peroxidase 2 (GPX2) (Pongo pygmaeus (Bornean orangutan)).